The primary structure comprises 309 residues: MILEDLLMVLSCLSLHALWKVRAVPILPLSLVPDTFDDAYVGCSEEMEEKAGLLLKEEMARHALLRESWEAAQEAWAHRRHKLTLPPGFKAQHGVAIMVYTNSSNTLYWELNQAVRTGGGSRELYMRHFPFKALHFYLTRALQLLRGSGGCSRGPGEVVFRGVGSLHFEPKRLGDSVRLGQFTSSSVDERVARRFGNATFFNLRTCFGAPIQALSVFPEEREVLIPPHEVFLVTGFSQDGAQSIVTLWSYDQTCSHFNCAYLGGEKRRGCVSSRAVGQPEAPSTEALALQSGKTLLLDPRKLQLSRAGP.

A signal peptide spans 1 to 23 (MILEDLLMVLSCLSLHALWKVRA). An intrachain disulfide couples C43 to C259. Positions 63–253 (ALLRESWEAA…IVTLWSYDQT (191 aa)) constitute a TR mART core domain. Residue Y100 participates in NAD(+) binding. N-linked (GlcNAc...) asparagine glycosylation is present at N102. NAD(+) contacts are provided by R161 and Q181. The active site involves R161. The active site involves S184. The N-linked (GlcNAc...) asparagine glycan is linked to N197. Position 215 (S215) interacts with NAD(+). Residue E222 is part of the active site.

This sequence belongs to the Arg-specific ADP-ribosyltransferase family. In terms of tissue distribution, abundantly expressed in testis. Lower levels in cardiac and skeletal muscle.

Its subcellular location is the secreted. The protein localises to the membrane. The catalysed reaction is L-arginyl-[protein] + NAD(+) = N(omega)-(ADP-D-ribosyl)-L-arginyl-[protein] + nicotinamide + H(+). This chain is Ecto-ADP-ribosyltransferase 5 (Art5), found in Mus musculus (Mouse).